The following is a 378-amino-acid chain: Filamin-binding LIM protein 1 (378 aa).

The filamin-binding stretch occupies residues 1 to 69 (MASKPEKRVA…RSWMPPGRAA (69 aa)). The interval 38 to 179 (WPGRPWESAP…PPPEEPVSFP (142 aa)) is disordered. A compositionally biased stretch (pro residues) spans 103-115 (LPPPPPPPAADLP). LIM zinc-binding domains are found at residues 186–247 (DICA…TLEK), 248–305 (CGKC…RKFA), and 306–375 (PVCS…RSAA). Residues 281-378 (IGDESFALDS…HVKRSAAGCC (98 aa)) form a PLEKHC1-binding region.

In terms of assembly, interacts with PLEKHC1, FLNA, FLNB and FLNC. Interacts with NKX2-5.

It localises to the cell junction. The protein localises to the focal adhesion. The protein resides in the cytoplasm. Its subcellular location is the cytoskeleton. It is found in the stress fiber. Functionally, serves as an anchoring site for cell-ECM adhesion proteins and filamin-containing actin filaments. Is implicated in cell shape modulation (spreading) and motility. May participate in the regulation of filamin-mediated cross-linking and stabilization of actin filaments. May also regulate the assembly of filamin-containing signaling complexes that control actin assembly. Promotes dissociation of FLNA from ITGB3 and ITGB7. Promotes activation of integrins and regulates integrin-mediated cell-cell adhesion. The polypeptide is Filamin-binding LIM protein 1 (FBLIM1) (Bos taurus (Bovine)).